Here is a 417-residue protein sequence, read N- to C-terminus: D-galactonate dehydratase family member Dd703_0947 (417 aa).

His-127 serves as a coordination point for substrate. Catalysis depends on Tyr-158, which acts as the Proton donor/acceptor. Asp-223 is a binding site for Mg(2+). Residue His-225 is the Proton donor/acceptor of the active site. The Mg(2+) site is built by Glu-249 and Glu-275. 5 residues coordinate substrate: Glu-275, Arg-296, His-325, Asp-329, and Glu-352.

It belongs to the mandelate racemase/muconate lactonizing enzyme family. GalD subfamily. Requires Mg(2+) as cofactor.

It carries out the reaction D-mannonate = 2-dehydro-3-deoxy-D-gluconate + H2O. It catalyses the reaction D-gluconate = 2-dehydro-3-deoxy-D-gluconate + H2O. Its function is as follows. Has low dehydratase activity with D-mannonate and D-gluconate, suggesting that these are not physiological substrates and that it has no significant role in the in vivo degradation of these compounds. Has no detectable activity with a panel of 70 other acid sugars (in vitro). The polypeptide is D-galactonate dehydratase family member Dd703_0947 (Musicola paradisiaca (strain Ech703) (Dickeya paradisiaca)).